A 149-amino-acid chain; its full sequence is Ricin B-like lectin (149 aa).

Ser-2 carries the N-acetylserine modification. 4 residues coordinate a carbohydrate: Asp-21, Gly-24, Asn-39, and Asn-47. Residues 110-112 (PNL) form an involved in dimerization region.

In terms of assembly, homodimer. In terms of processing, the N-terminus is blocked.

Lectin specific for terminal, non-reducing N-acetylgalactosamine (Gal-NAc)-containing carbohydrates including N,N'-diacetyllactosediamine/LDN (GalNAcbeta1-4GlcNAc, LacdiNAc). Specific also for carbohydrates containing N-acetylglucosamine (-GlcNAc) or N-acetyllactosamine (-Galbeta1-4GlcNAc) at the reducing end. Agglutinates human blood group A, AB, B and O erythrocytes with a strong preference for group A. Agglutinates bovine erythrocytes with a very low specificity. Binds carbohydrates bivalently, which is required for its biological activity. Exhibits insecticidal activity against the fruit fly D.melanogaster, mosquito A.aegypti, and amoebozoa A.castellanii. Has anti-nutritional activity against Colorado potato beetle L.decemlineata, and against worm C.elegans. Has antiproliferative activity against human leukemic T-cells. Has an immunostimulatory effect on human antigen-presenting dendritic cells, which are subsequently able to induce efficient T-cell immune responses. In Clitocybe nebularis (Clouded agaric), this protein is Ricin B-like lectin.